Reading from the N-terminus, the 376-residue chain is Arginine/serine-rich coiled-coil protein 2 (376 aa).

The tract at residues M1 to N171 is disordered. A compositionally biased stretch (basic and acidic residues) spans R13 to R52. At S45 the chain carries Phosphoserine. The segment covering H53–S155 has biased composition (basic residues). The stretch at N171–T214 forms a coiled coil. K317 participates in a covalent cross-link: Glycyl lysine isopeptide (Lys-Gly) (interchain with G-Cter in SUMO1); alternate. A Glycyl lysine isopeptide (Lys-Gly) (interchain with G-Cter in SUMO2); alternate cross-link involves residue K317. At S318 the chain carries Phosphoserine.

The protein belongs to the RSRC2 family.

This chain is Arginine/serine-rich coiled-coil protein 2 (Rsrc2), found in Mus musculus (Mouse).